Consider the following 156-residue polypeptide: Small ribosomal subunit protein uS7c (156 aa).

Belongs to the universal ribosomal protein uS7 family. As to quaternary structure, part of the 30S ribosomal subunit.

Its subcellular location is the plastid. The protein resides in the chloroplast. Functionally, one of the primary rRNA binding proteins, it binds directly to 16S rRNA where it nucleates assembly of the head domain of the 30S subunit. In Porphyra purpurea (Red seaweed), this protein is Small ribosomal subunit protein uS7c (rps7).